The chain runs to 394 residues: Elongation factor Tu (394 aa).

The tr-type G domain occupies 10 to 205; it reads KPHMNVGTIG…TMDSYFDLPE (196 aa). The interval 19–26 is G1; that stretch reads GHVDHGKT. Residue 19–26 coordinates GTP; that stretch reads GHVDHGKT. A Mg(2+)-binding site is contributed by Thr-26. A G2 region spans residues 61-65; sequence GITIN. Positions 82–85 are G3; the sequence is DCPG. Residues 82–86 and 137–140 each bind GTP; these read DCPGH and NKLD. Positions 137–140 are G4; the sequence is NKLD. A G5 region spans residues 173–175; it reads SAF.

Belongs to the TRAFAC class translation factor GTPase superfamily. Classic translation factor GTPase family. EF-Tu/EF-1A subfamily. Monomer.

The protein localises to the cytoplasm. It catalyses the reaction GTP + H2O = GDP + phosphate + H(+). GTP hydrolase that promotes the GTP-dependent binding of aminoacyl-tRNA to the A-site of ribosomes during protein biosynthesis. The chain is Elongation factor Tu from Borrelia hermsii (strain HS1 / DAH).